A 301-amino-acid chain; its full sequence is Ribonuclease Z (301 aa).

The Zn(2+) site is built by histidine 61, histidine 63, aspartate 65, histidine 66, histidine 140, aspartate 211, and histidine 269. Aspartate 65 (proton acceptor) is an active-site residue.

It belongs to the RNase Z family. In terms of assembly, homodimer. Zn(2+) serves as cofactor.

The enzyme catalyses Endonucleolytic cleavage of RNA, removing extra 3' nucleotides from tRNA precursor, generating 3' termini of tRNAs. A 3'-hydroxy group is left at the tRNA terminus and a 5'-phosphoryl group is left at the trailer molecule.. Zinc phosphodiesterase, which displays some tRNA 3'-processing endonuclease activity. Probably involved in tRNA maturation, by removing a 3'-trailer from precursor tRNA. This Bradyrhizobium sp. (strain ORS 278) protein is Ribonuclease Z.